The following is a 91-amino-acid chain: uncharacterized protein (91 aa).

This is an uncharacterized protein from Acidianus convivator (ABV).